Consider the following 137-residue polypeptide: Fluoride-specific ion channel FluC 1 (137 aa).

4 helical membrane passes run Leu4–Gly24, Leu37–Ile57, Val67–Val87, and Ile100–Tyr120. Residues Gly77 and Thr80 each coordinate Na(+).

The protein belongs to the fluoride channel Fluc/FEX (TC 1.A.43) family.

The protein localises to the cell membrane. The enzyme catalyses fluoride(in) = fluoride(out). Na(+) is not transported, but it plays an essential structural role and its presence is essential for fluoride channel function. Functionally, fluoride-specific ion channel. Important for reducing fluoride concentration in the cell, thus reducing its toxicity. This is Fluoride-specific ion channel FluC 1 from Bacillus thuringiensis subsp. konkukian (strain 97-27).